A 603-amino-acid polypeptide reads, in one-letter code: MVIYCNLHTVIMNIFYNNIHRCFKDTPLHKAVMLPDAVERIRMFVSKGADINVISDFKKTALHYAAKKLATPEVLKTLIYLGTNVNVTDMFESTPLHYAVQENGLEATKKLLDLGADPNTKYMNGQTPLHCAAMVIPDGPELVRILVEYGANVNALDNKHNTPLALAAELSNTNKTIETLIELGADVKIKNNDGITPLHLAAKSSSDSKTVETLILHGADVNATCSEGNTPLHDAATSYELSNTIEMLIEYGAEVNAANSVGDTPLHCAARSRNPVHKLKTLIAHGSNVNAVNGISVTPLHLATYSDNATEALKVLIEHGAEVNSVDIYGRTPMHYISRSYSSQSLKTAVELLVEHGADIEAKNVIGGTPLSSACNNIEYDLRLIECFIEYGADINTRDIRDETPLYSAIKYPEIVNLLMNYSASTNITNKSNITPLESAIANCIGSAEIIVTQIILDAFRFPDIKNDAIFIRNMKTIEECTMLIDVKESCEYDINKMRSIKFNNMYGLDIFIRSNNINLLSSLVSNVEDIYLEPGCFLVYGNKLRKSVYAARKRLSLLKNSISILSNITTDGYWNALPIELKYNILAMLGDNDLFNIVRNCS.

ANK repeat units lie at residues F23 to V53, F57 to V87, F91 to T120, N124 to A155, K159 to I189, D193 to A223, E227 to A257, V261 to A291, I295 to S325, Y329 to A362, I366 to T397, R401 to I428, S432 to N467, and N504 to L533.

This chain is Putative ankyrin repeat protein FPV162, found in Vertebrata (FPV).